Here is a 100-residue protein sequence, read N- to C-terminus: Large ribosomal subunit protein uL23 (100 aa).

The protein belongs to the universal ribosomal protein uL23 family. Part of the 50S ribosomal subunit. Contacts protein L29, and trigger factor when it is bound to the ribosome.

Functionally, one of the early assembly proteins it binds 23S rRNA. One of the proteins that surrounds the polypeptide exit tunnel on the outside of the ribosome. Forms the main docking site for trigger factor binding to the ribosome. This is Large ribosomal subunit protein uL23 from Vibrio cholerae serotype O1 (strain ATCC 39541 / Classical Ogawa 395 / O395).